A 129-amino-acid polypeptide reads, in one-letter code: Protein BEX2 (129 aa).

A disordered region spans residues Met-1–Val-38. The span at Glu-15–Pro-36 shows a compositional bias: basic and acidic residues. Arg-51 bears the Omega-N-methylarginine mark. Residues Ser-108 to Pro-129 are disordered. Positions Pro-116–Pro-129 are enriched in basic and acidic residues. The tract at residues His-118 to His-122 is his cluster. Cys-126 lines the Zn(2+) pocket.

The protein belongs to the BEX family. As to quaternary structure, interacts with LMO2, possibly leading to regulate the transcriptional activity of a DNA-binding complex containing LMO2. Interacts with OMP.

Its subcellular location is the nucleus. The protein resides in the cytoplasm. In terms of biological role, regulator of mitochondrial apoptosis and G1 cell cycle. Regulates the level of PP2A regulatory subunit B and PP2A phosphatase activity. In absence of reductive stress, acts as a pseudosubstrate for the CRL2(FEM1B) complex: associates with FEM1B via zinc, thereby preventing association between FEM1B and its substrates. The chain is Protein BEX2 (Bex2) from Rattus norvegicus (Rat).